The primary structure comprises 256 residues: Indole-3-glycerol phosphate synthase (256 aa).

Belongs to the TrpC family.

It catalyses the reaction 1-(2-carboxyphenylamino)-1-deoxy-D-ribulose 5-phosphate + H(+) = (1S,2R)-1-C-(indol-3-yl)glycerol 3-phosphate + CO2 + H2O. It functions in the pathway amino-acid biosynthesis; L-tryptophan biosynthesis; L-tryptophan from chorismate: step 4/5. In Caldanaerobacter subterraneus subsp. tengcongensis (strain DSM 15242 / JCM 11007 / NBRC 100824 / MB4) (Thermoanaerobacter tengcongensis), this protein is Indole-3-glycerol phosphate synthase.